Here is a 280-residue protein sequence, read N- to C-terminus: Transcription factor ovo-like homolog lin-48 (280 aa).

4 consecutive C2H2-type zinc fingers follow at residues 133–155 (LTCHICGKKFGLQRLLNRHIKCH), 161–183 (YLCTFCGKGFNDTFDLKRHTRTH), 189–212 (YKCEQCEKSFTQRCSLESHLRKVH), and 228–251 (FVCEDCGYTDEKFEVYLSHIKVVH).

It is found in the nucleus. In terms of biological role, transcription factor. Involved in development of the hindgut, the male tail, and the excretory duct cell. Involved in modulating function of excretory duct cells. Plays a role in left/right patterning of cell fates in the hindgut. The protein is Transcription factor ovo-like homolog lin-48 of Caenorhabditis elegans.